Here is a 382-residue protein sequence, read N- to C-terminus: Acetylxylan esterase A (382 aa).

The first 21 residues, 1–21 (MKSLSFSFLVTLFLYLTLSSA), serve as a signal peptide directing secretion. Positions 22–31 (RTLGKDVNKR) are excised as a propeptide. A catalytic region spans residues 35–307 (GSLQQVTGFG…GAKDMEWFGF (273 aa)). Residue N46 is glycosylated (N-linked (GlcNAc...) asparagine). S152 serves as the catalytic Charge relay system. N194 carries N-linked (GlcNAc...) asparagine glycosylation. The tract at residues 308–345 (SGSGSSSTTTASATKTSTTSTTSTKTTSSTSSTTTSST) is ser/Thr-rich linker. Positions 313–345 (SSTTTASATKTSTTSTTSTKTTSSTSSTTTSST) are enriched in low complexity. Residues 313–346 (SSTTTASATKTSTTSTTSTKTTSSTSSTTTSSTG) form a disordered region. Positions 346–382 (GVAAHWGQCGGSGWTGPTVCESGYTCTYSNAWYSQCL) constitute a CBM1 domain.

It belongs to the carbohydrate esterase 1 (CE1) family. AxeA subfamily. As to quaternary structure, monomer. Post-translationally, glycosylated.

Its subcellular location is the secreted. The catalysed reaction is Deacetylation of xylans and xylo-oligosaccharides.. Its pathway is glycan degradation; xylan degradation. With respect to regulation, inactivated by phenylmethylsulfonylfluorid (PMSF), a specific inhibitor of serine esterases. Its function is as follows. Acetylxylan esterase involved in the hydrolysis of xylan, a major structural heterogeneous polysaccharide found in plant biomass representing the second most abundant polysaccharide in the biosphere, after cellulose. Degrades acetylated xylans by cleaving acetyl side groups from the hetero-xylan backbone. The protein is Acetylxylan esterase A (axeA) of Talaromyces purpureogenus (Soft rot fungus).